Reading from the N-terminus, the 171-residue chain is UPF0303 protein YPK_1581 (171 aa).

Belongs to the UPF0303 family.

The protein is UPF0303 protein YPK_1581 of Yersinia pseudotuberculosis serotype O:3 (strain YPIII).